Here is a 299-residue protein sequence, read N- to C-terminus: Protease HtpX homolog (299 aa).

2 helical membrane passes run 14 to 34 (WLLL…VGYL) and 39 to 59 (GFGG…TMIF). Residue histidine 143 participates in Zn(2+) binding. The active site involves glutamate 144. Histidine 147 provides a ligand contact to Zn(2+). Transmembrane regions (helical) follow at residues 153-173 (IRIS…AVMA) and 198-218 (IILL…ATLV). Glutamate 227 is a binding site for Zn(2+).

It belongs to the peptidase M48B family. Zn(2+) is required as a cofactor.

Its subcellular location is the cell membrane. This chain is Protease HtpX homolog, found in Streptococcus thermophilus (strain CNRZ 1066).